We begin with the raw amino-acid sequence, 232 residues long: Small ribosomal subunit protein uS3 (232 aa).

Positions 39–107 (VRQFLTKELA…PAQINIAEVR (69 aa)) constitute a KH type-2 domain.

Belongs to the universal ribosomal protein uS3 family. As to quaternary structure, part of the 30S ribosomal subunit. Forms a tight complex with proteins S10 and S14.

Its function is as follows. Binds the lower part of the 30S subunit head. Binds mRNA in the 70S ribosome, positioning it for translation. The polypeptide is Small ribosomal subunit protein uS3 (Yersinia pseudotuberculosis serotype O:1b (strain IP 31758)).